The chain runs to 214 residues: Ras-related protein Rab-17 (214 aa).

The residue at position 29 (S29) is a Phosphoserine. Positions 31, 32, 33, and 50 each coordinate GTP. Positions 33, 50, and 73 each coordinate Mg(2+). Residues 43 to 54 (DFSNVLPTVGCA) carry the Switch 1 motif. The short motif at 75 to 91 (AGQEKYQSVCHLYFRGA) is the Switch 2 element. 5 residues coordinate GTP: G76, N132, K133, D135, and A163. The tract at residues 183 to 204 (RAGDTGSSRPQEGEAVALNQEP) is disordered. S-geranylgeranyl cysteine attachment occurs at residues C211 and C212.

It belongs to the small GTPase superfamily. Rab family. The cofactor is Mg(2+). As to expression, expressed in kidney, liver, and intestine mainly by epithelial cells. Expressed in hippocampus (at protein level).

The protein localises to the recycling endosome membrane. It localises to the melanosome. Its subcellular location is the cell projection. It is found in the dendrite. The enzyme catalyses GTP + H2O = GDP + phosphate + H(+). Regulated by guanine nucleotide exchange factors (GEFs) which promote the exchange of bound GDP for free GTP. Regulated by GTPase activating proteins (GAPs) which increase the GTP hydrolysis activity. Inhibited by GDP dissociation inhibitors (GDIs). In terms of biological role, the small GTPases Rab are key regulators of intracellular membrane trafficking, from the formation of transport vesicles to their fusion with membranes. Rabs cycle between an inactive GDP-bound form and an active GTP-bound form that is able to recruit to membranes different set of downstream effectors directly responsible for vesicle formation, movement, tethering and fusion. RAB17 is involved in transcytosis, the directed movement of endocytosed material through the cell and its exocytosis from the plasma membrane at the opposite side. Mainly observed in epithelial cells, transcytosis mediates, for instance, the transcellular transport of immunoglobulins from the basolateral surface to the apical surface. Most probably controls membrane trafficking through apical recycling endosomes in a post-endocytic step of transcytosis. Required for melanosome transport and release from melanocytes, it also regulates dendrite and dendritic spine development. May also play a role in cell migration. The polypeptide is Ras-related protein Rab-17 (Mus musculus (Mouse)).